We begin with the raw amino-acid sequence, 120 residues long: Protein CcdB (120 aa).

Residues 3 to 118 enclose the Response regulatory domain; the sequence is RVLVVDDAKF…KVLEAVSRVM (116 aa). Position 53 is a 4-aspartylphosphate (Asp53).

The protein is Protein CcdB (ccdB) of Bacillus subtilis (strain 168).